Consider the following 155-residue polypeptide: 3-hydroxyacyl-[acyl-carrier-protein] dehydratase FabZ (155 aa).

His54 is an active-site residue.

This sequence belongs to the thioester dehydratase family. FabZ subfamily.

Its subcellular location is the cytoplasm. It carries out the reaction a (3R)-hydroxyacyl-[ACP] = a (2E)-enoyl-[ACP] + H2O. Functionally, involved in unsaturated fatty acids biosynthesis. Catalyzes the dehydration of short chain beta-hydroxyacyl-ACPs and long chain saturated and unsaturated beta-hydroxyacyl-ACPs. This chain is 3-hydroxyacyl-[acyl-carrier-protein] dehydratase FabZ, found in Burkholderia lata (strain ATCC 17760 / DSM 23089 / LMG 22485 / NCIMB 9086 / R18194 / 383).